The chain runs to 194 residues: Holliday junction branch migration complex subunit RuvA (194 aa).

The domain I stretch occupies residues 1–64 (MISRLTGKLV…EDAHLLFGFA (64 aa)). The segment at 65 to 143 (TAEERKTFRQ…AHTVTDGLFA (79 aa)) is domain II. Residues 144-147 (AAPA) form a flexible linker region. The interval 147 to 194 (AADETEDIVSTLLALGYSEREAKAAVKGVPEGTDVGEGVRLALKNLLK) is domain III.

This sequence belongs to the RuvA family. In terms of assembly, homotetramer. Forms an RuvA(8)-RuvB(12)-Holliday junction (HJ) complex. HJ DNA is sandwiched between 2 RuvA tetramers; dsDNA enters through RuvA and exits via RuvB. An RuvB hexamer assembles on each DNA strand where it exits the tetramer. Each RuvB hexamer is contacted by two RuvA subunits (via domain III) on 2 adjacent RuvB subunits; this complex drives branch migration. In the full resolvosome a probable DNA-RuvA(4)-RuvB(12)-RuvC(2) complex forms which resolves the HJ.

Its subcellular location is the cytoplasm. Functionally, the RuvA-RuvB-RuvC complex processes Holliday junction (HJ) DNA during genetic recombination and DNA repair, while the RuvA-RuvB complex plays an important role in the rescue of blocked DNA replication forks via replication fork reversal (RFR). RuvA specifically binds to HJ cruciform DNA, conferring on it an open structure. The RuvB hexamer acts as an ATP-dependent pump, pulling dsDNA into and through the RuvAB complex. HJ branch migration allows RuvC to scan DNA until it finds its consensus sequence, where it cleaves and resolves the cruciform DNA. The sequence is that of Holliday junction branch migration complex subunit RuvA from Neisseria meningitidis serogroup C (strain 053442).